Here is a 133-residue protein sequence, read N- to C-terminus: Holo-[acyl-carrier-protein] synthase (133 aa).

Mg(2+) is bound by residues D8 and E56.

The protein belongs to the P-Pant transferase superfamily. AcpS family. Mg(2+) serves as cofactor.

It localises to the cytoplasm. It catalyses the reaction apo-[ACP] + CoA = holo-[ACP] + adenosine 3',5'-bisphosphate + H(+). Its function is as follows. Transfers the 4'-phosphopantetheine moiety from coenzyme A to a Ser of acyl-carrier-protein. This Clostridium perfringens (strain 13 / Type A) protein is Holo-[acyl-carrier-protein] synthase.